A 432-amino-acid chain; its full sequence is Major royal jelly protein 1 (432 aa).

The N-terminal stretch at 1–19 (MTRLFMLVCLGIVCQGTTG) is a signal peptide. N-linked (GlcNAc...) asparagine glycans are attached at residues Asn28, Asn144, and Asn177. Disulfide bonds link Cys118/Cys150, Cys132/Cys195, and Cys329/Cys416. Pro364 is a binding site for 24-methylenecholesterol. His431 is subject to Histidine amide; atypical. At Leu432 the chain carries Leucine amide; atypical.

This sequence belongs to the major royal jelly protein family. Is present in royal jelly in different forms: monomer (55 kDa), oligomeric subunit (ca. 287-420 kDa), and water-insoluble aggregates in sediment after interaction with fatty acids. Component of the apisin heterooligomer complex consisting of 4 copies of MRJP1 and 4 copies of apisimin, associated with 8 molecules of 24-methylenecholesterol; apisimin forms a bridge connecting two MRJP1 dimers. At low pH multiple apisin octamers stack to form filaments that increase the viscosity of royal jelly; these filaments may be stabilized by bound fatty acid chains. The mandibular gland, where royal jelly is produced, has low pH conditions favouring filament formation, while the higher pH of the insect midgut favors filament disassembly. In terms of processing, N-glycosylated on Asn-28, Asn-144 and Asn-177. Glycosylation is required to prevent apisin multimers from aggregating. Post-translationally, jellein-2 is probably processed to yield jellein-1 and jellein-4. As to expression, found in and secreted from the hypopharyngeal glands of the worker honey bee (at protein level); expression peaks at 12 days post eclosion. Expressed in the brains of worker bees (at protein level); found in antennal lobe, optical lobe and a subpopulation of Kenyon cells in the mushroom body. Found in the ommatidia of worker bees (at protein level). Expressed in the spermatheca of adult queen bees (at protein level); expression levels are higher in mated queens than in virgin queens. Expressed in queen bee ovaries and male drone testes.

It localises to the secreted. The protein localises to the cytoplasm. The protein resides in the cell projection. Its subcellular location is the rhabdomere. It is found in the cytoskeleton. In terms of biological role, most abundant protein component of royal jelly, a substance produced in the hypopharyngeal gland containing proteins, free amino acids, fatty acids, sugars and other nutrients, which is fed to developing larvae by worker nurse bees. Major royal jelly proteins (Mrjps) are high in essential amino acids and probably have a nutritional function in larval food. All larvae are fed some royal jelly (also known as worker jelly) early in their development but it forms the principal source of nutrition for larvae destined to become queen bees. Induces the differentiation of honey bee larvae into queens through an Egfr-mediated signaling pathway. Promotes body size increase by activating p70 S6 kinase, stimulates ovary development by augmenting the titer of vitellogenin (Vg) and juvenile hormone, and reduces developmental time by increasing the activity of mitogen-activated protein kinase and inducing 20-hydroxyecdysone (ecdysterone, 20E) production. Together with apisimin forms the apisin complex that polymerizes at low pH, forming a fiber network and increasing the viscosity of royal jelly. The viscous royal Jelly placed in honeycomb cells containing larvae destined to become queens acts as both a food supply and an adhesive preventing larvae from falling out; queens are reared in special large cells oriented vertically. Produced in the spermatheca of adult queen bees, along with other major royal jelly proteins, where it may act as a nutrient supply for sperm stored by mated queens, or be involved in energy metabolism. Functionally, has antibacterial activity against the Gram-positive bacteria S.aureus ATCC 6535, S.saprophyticus and B.subtilis CCT2471, and the Gram-negative bacteria E.coli CCT1371, E.cloacae ATCC 23355, K.pneumoniae ATCC 13883 and P.aeruginosa ATCC 27853, and antifungal activity against C.albicans. Lack cytolytic activity and does not induce rat peritoneal mast cell degranulation. Its function is as follows. Lacks antibacterial and antifungal activity. Lacks cytolytic activity and does not induce rat peritoneal mast cell degranulation. In Apis mellifera (Honeybee), this protein is Major royal jelly protein 1.